The following is a 297-amino-acid chain: tRNA dimethylallyltransferase (297 aa).

10–17 is an ATP binding site; sequence GITASGKS. 12–17 is a binding site for substrate; that stretch reads TASGKS. The interval 36-39 is interaction with substrate tRNA; that stretch reads DSKQ.

It belongs to the IPP transferase family. Monomer. Mg(2+) is required as a cofactor.

It catalyses the reaction adenosine(37) in tRNA + dimethylallyl diphosphate = N(6)-dimethylallyladenosine(37) in tRNA + diphosphate. Catalyzes the transfer of a dimethylallyl group onto the adenine at position 37 in tRNAs that read codons beginning with uridine, leading to the formation of N6-(dimethylallyl)adenosine (i(6)A). This chain is tRNA dimethylallyltransferase, found in Wolbachia pipientis wMel.